A 1058-amino-acid polypeptide reads, in one-letter code: Carbamoyl phosphate synthase large chain (1058 aa).

The carboxyphosphate synthetic domain stretch occupies residues M1–E401. ATP contacts are provided by R129, R169, G175, G176, R208, I210, E215, G241, I242, H243, Q284, and E298. Residues K133–V327 form the ATP-grasp 1 domain. Residues Q284, E298, and N300 each contribute to the Mg(2+) site. Residues Q284, E298, and N300 each coordinate Mn(2+). Positions I402 to S546 are oligomerization domain. Residues I547–Y929 form a carbamoyl phosphate synthetic domain region. An ATP-grasp 2 domain is found at E671–L861. ATP is bound by residues R707, S746, I748, E752, G777, V778, H779, S780, Q820, and E832. Mg(2+)-binding residues include Q820, E832, and N834. Mn(2+) contacts are provided by Q820, E832, and N834. The MGS-like domain occupies L930–I1058. The interval L930–I1058 is allosteric domain.

Belongs to the CarB family. In terms of assembly, composed of two chains; the small (or glutamine) chain promotes the hydrolysis of glutamine to ammonia, which is used by the large (or ammonia) chain to synthesize carbamoyl phosphate. Tetramer of heterodimers (alpha,beta)4. Mg(2+) serves as cofactor. The cofactor is Mn(2+).

The catalysed reaction is hydrogencarbonate + L-glutamine + 2 ATP + H2O = carbamoyl phosphate + L-glutamate + 2 ADP + phosphate + 2 H(+). The enzyme catalyses hydrogencarbonate + NH4(+) + 2 ATP = carbamoyl phosphate + 2 ADP + phosphate + 2 H(+). It participates in amino-acid biosynthesis; L-arginine biosynthesis; carbamoyl phosphate from bicarbonate: step 1/1. It functions in the pathway pyrimidine metabolism; UMP biosynthesis via de novo pathway; (S)-dihydroorotate from bicarbonate: step 1/3. Functionally, large subunit of the glutamine-dependent carbamoyl phosphate synthetase (CPSase). CPSase catalyzes the formation of carbamoyl phosphate from the ammonia moiety of glutamine, carbonate, and phosphate donated by ATP, constituting the first step of 2 biosynthetic pathways, one leading to arginine and/or urea and the other to pyrimidine nucleotides. The large subunit (synthetase) binds the substrates ammonia (free or transferred from glutamine from the small subunit), hydrogencarbonate and ATP and carries out an ATP-coupled ligase reaction, activating hydrogencarbonate by forming carboxy phosphate which reacts with ammonia to form carbamoyl phosphate. The protein is Carbamoyl phosphate synthase large chain of Streptococcus pneumoniae (strain ATCC 700669 / Spain 23F-1).